The sequence spans 630 residues: Pentatricopeptide repeat-containing protein At1g26460, mitochondrial (630 aa).

The transit peptide at 1–115 (MASHLFTRSR…RALSETLDMN (115 aa)) directs the protein to the mitochondrion. Residues 42–79 (LLATESTDHDPSNHQSTSTPLPPNPATGSPLYQENWRS) are disordered. Over residues 67-77 (ATGSPLYQENW) the composition is skewed to polar residues. 6 PPR repeats span residues 154-189 (DVNLYNHYLRANLMMGASAGDMLDLVAPMEEFSVEP), 190-224 (NTASYNLVLKAMYQARETEAAMKLLERMLLLGKDS), 227-261 (DDESYDLVIGMHFGVGKNDEAMKVMDTALKSGYML), 468-503 (SVAALNCIILGCANTWDLDRAYQTFEAISASFGLTP), 504-538 (NIDSYNALLYAFGKVKKTFEATNVFEHLVSIGVKP), and 539-573 (DSRTYSLLVDAHLINRDPKSALTVVDDMIKAGFEP).

The protein belongs to the PPR family. P subfamily.

It is found in the mitochondrion. This is Pentatricopeptide repeat-containing protein At1g26460, mitochondrial from Arabidopsis thaliana (Mouse-ear cress).